The sequence spans 638 residues: Zona pellucida sperm-binding protein 1 (638 aa).

An N-terminal signal peptide occupies residues Met1 to Gly25. Residues Arg26–Pro601 lie on the Extracellular side of the membrane. Asn76 carries N-linked (GlcNAc...) asparagine glycosylation. Residues Leu165–Ser175 are compositionally biased toward polar residues. Positions Leu165–Leu208 are disordered. Residues Glu234–Asn274 form the P-type domain. 3 cysteine pairs are disulfide-bonded: Cys236-Cys261, Cys245-Cys260, and Cys255-Cys270. Residues Gln279–Gln553 form the ZP domain. A glycan (N-linked (GlcNAc...) asparagine) is linked at Asn379. Cysteines 457 and 478 form a disulfide. The disordered stretch occupies residues Gly549–Asn594. The propeptide at Arg554–Gln638 is removed in mature form. Asn561 and Asn596 each carry an N-linked (GlcNAc...) asparagine glycan. The chain crosses the membrane as a helical span at residues Leu602 to Val622. Topologically, residues Gly623–Gln638 are cytoplasmic.

The protein belongs to the ZP domain family. ZPB subfamily. In terms of assembly, polymers of ZP2 and ZP3 organized into long filaments cross-linked by ZP1 homodimers. Interacts with ZP3. Post-translationally, proteolytically cleaved before the transmembrane segment to yield the secreted ectodomain incorporated in the zona pellucida. O-glycosylated. Expressed in oocytes (at protein level).

The protein resides in the zona pellucida. The protein localises to the cell membrane. Component of the zona pellucida, an extracellular matrix surrounding oocytes which mediates sperm binding, induction of the acrosome reaction and prevents post-fertilization polyspermy. The zona pellucida is composed of 3 to 4 glycoproteins, ZP1, ZP2, ZP3, and ZP4. ZP1 ensures the structural integrity of the zona pellucida. This is Zona pellucida sperm-binding protein 1 (ZP1) from Homo sapiens (Human).